A 288-amino-acid chain; its full sequence is Bifunctional protein FolD (288 aa).

NADP(+) contacts are provided by residues 166-168, Ser-191, and Ile-232; that span reads GRS.

The protein belongs to the tetrahydrofolate dehydrogenase/cyclohydrolase family. As to quaternary structure, homodimer.

It catalyses the reaction (6R)-5,10-methylene-5,6,7,8-tetrahydrofolate + NADP(+) = (6R)-5,10-methenyltetrahydrofolate + NADPH. It carries out the reaction (6R)-5,10-methenyltetrahydrofolate + H2O = (6R)-10-formyltetrahydrofolate + H(+). It participates in one-carbon metabolism; tetrahydrofolate interconversion. Catalyzes the oxidation of 5,10-methylenetetrahydrofolate to 5,10-methenyltetrahydrofolate and then the hydrolysis of 5,10-methenyltetrahydrofolate to 10-formyltetrahydrofolate. The sequence is that of Bifunctional protein FolD from Rickettsia massiliae (strain Mtu5).